The chain runs to 411 residues: LL-diaminopimelate aminotransferase (411 aa).

Substrate contacts are provided by tyrosine 15 and glycine 42. Pyridoxal 5'-phosphate-binding positions include tyrosine 72, 108-109, tyrosine 132, asparagine 187, tyrosine 218, and 246-248; these read SK and SFS. Substrate-binding residues include lysine 109, tyrosine 132, and asparagine 187. An N6-(pyridoxal phosphate)lysine modification is found at lysine 249. 2 residues coordinate pyridoxal 5'-phosphate: arginine 257 and asparagine 292. Asparagine 292 and arginine 388 together coordinate substrate.

It belongs to the class-I pyridoxal-phosphate-dependent aminotransferase family. LL-diaminopimelate aminotransferase subfamily. In terms of assembly, homodimer. Pyridoxal 5'-phosphate serves as cofactor.

The enzyme catalyses (2S,6S)-2,6-diaminopimelate + 2-oxoglutarate = (S)-2,3,4,5-tetrahydrodipicolinate + L-glutamate + H2O + H(+). It functions in the pathway amino-acid biosynthesis; L-lysine biosynthesis via DAP pathway; LL-2,6-diaminopimelate from (S)-tetrahydrodipicolinate (aminotransferase route): step 1/1. Involved in the synthesis of meso-diaminopimelate (m-DAP or DL-DAP), required for both lysine and peptidoglycan biosynthesis. Catalyzes the direct conversion of tetrahydrodipicolinate to LL-diaminopimelate. This Cyanothece sp. (strain PCC 7425 / ATCC 29141) protein is LL-diaminopimelate aminotransferase.